The sequence spans 83 residues: Erabutoxin c (83 aa).

Residues 1–21 (MKTLLLTLVVVTIVCLDLGYT) form the signal peptide. A loop I region spans residues 24–38 (CFNHQSSQPQTTKTC). 4 disulfide bridges follow: C24-C45, C38-C62, C64-C75, and C76-C81. The stretch between loop I and loop II stretch occupies residues 39 to 44 (SPGESS). The tract at residues 45-62 (CYHKQWSDFRGTIIERGC) is loop II. The tract at residues 64–75 (CPTVKPGINLSC) is loop III.

This sequence belongs to the three-finger toxin family. Short-chain subfamily. Type I alpha-neurotoxin sub-subfamily. In terms of tissue distribution, expressed by the venom gland.

The protein localises to the secreted. In terms of biological role, binds to muscle nicotinic acetylcholine receptor (nAChR) and inhibit acetylcholine from binding to the receptor, thereby impairing neuromuscular transmission. Binds to Torpedo marmorata nAChR (Kd=0.14 nM). The sequence is that of Erabutoxin c from Laticauda semifasciata (Black-banded sea krait).